Reading from the N-terminus, the 160-residue chain is Cytosolic iron-sulfur assembly component 2A (160 aa).

H89, H123, E150, and E153 together coordinate Zn(2+).

It belongs to the MIP18 family. Monomer and homodimer. Component of the CIA complex. Interacts with CIAO1. Interacts with IREB2. Interacts with APAF1. In terms of tissue distribution, substantially enriched in macrophages.

It is found in the cytoplasm. Functionally, component of the cytosolic iron-sulfur protein assembly (CIA) complex, a multiprotein complex that mediates the incorporation of iron-sulfur cluster into extramitochondrial Fe/S proteins. As a CIA complex component and in collaboration with CIAO1 specifically matures ACO1 and stabilizes IREB2, connecting cytosolic iron-sulfur protein maturation with cellular iron regulation. May play a role in chromosome segregation through establishment of sister chromatid cohesion. May induce apoptosis in collaboration with APAF1. This Homo sapiens (Human) protein is Cytosolic iron-sulfur assembly component 2A.